The chain runs to 46 residues: U-myrmeciitoxin(01)-Mg6a (46 aa).

The signal sequence occupies residues 1 to 20 (MNLKTFCFFLLGIFVTLTVT). A propeptide spanning residues 21–33 (VIPIANADAEADT) is cleaved from the precursor.

Post-translationally, contains 1 disulfide bond. Expressed by the venom gland.

The protein resides in the secreted. The polypeptide is U-myrmeciitoxin(01)-Mg6a (Myrmecia gulosa (Red bulldog ant)).